Consider the following 1218-residue polypeptide: Thrombospondin type 1 domain-containing protein (1218 aa).

Disordered regions lie at residues 82 to 101 (SAGF…PCSS), 189 to 240 (SLEE…SRTR), 298 to 383 (HTAN…VNGL), and 445 to 471 (GGKS…SHRG). A compositionally biased stretch (basic and acidic residues) spans 201 to 210 (GYEEERERRS). The segment covering 315 to 375 (SSRFTSKASS…SSPLSSSPDS (61 aa)) has biased composition (low complexity). The 67-residue stretch at 638-704 (SCITGPWSEW…RRKCNLGACP (67 aa)) folds into the TSP type-1 domain. A helical transmembrane segment spans residues 886 to 906 (GVSHLWISLCAGAVAAVVFLV). The segment at 1129 to 1153 (RRRARRGRREGDSGEGGDCGEARKA) is disordered.

As to quaternary structure, component of a complex, at least composed of cysteine repeat modular protein A (CRMPa), cysteine repeat modular protein B (CRMPb), micronemal protein 15 (MIC15) and thrombospondin type 1 domain-containing protein (TSP1).

The protein localises to the membrane. Its function is as follows. Required for rhoptry secretion. Plays a role in host cell invasion. The protein is Thrombospondin type 1 domain-containing protein of Toxoplasma gondii.